We begin with the raw amino-acid sequence, 275 residues long: Sulfur carrier protein FdhD (275 aa).

Cys-121 functions as the Cysteine persulfide intermediate in the catalytic mechanism. Position 258–263 (258–263 (FSKPGR)) interacts with Mo-bis(molybdopterin guanine dinucleotide).

The protein belongs to the FdhD family.

It is found in the cytoplasm. Required for formate dehydrogenase (FDH) activity. Acts as a sulfur carrier protein that transfers sulfur from IscS to the molybdenum cofactor prior to its insertion into FDH. The chain is Sulfur carrier protein FdhD from Yersinia enterocolitica serotype O:8 / biotype 1B (strain NCTC 13174 / 8081).